The primary structure comprises 187 residues: ATP synthase subunit b, chloroplastic (187 aa).

Residues 34–56 (LINLAAVIGLLFYSGRSFLTNLL) traverse the membrane as a helical segment.

The protein belongs to the ATPase B chain family. In terms of assembly, F-type ATPases have 2 components, F(1) - the catalytic core - and F(0) - the membrane proton channel. F(1) has five subunits: alpha(3), beta(3), gamma(1), delta(1), epsilon(1). F(0) has four main subunits: a(1), b(1), b'(1) and c(10-14). The alpha and beta chains form an alternating ring which encloses part of the gamma chain. F(1) is attached to F(0) by a central stalk formed by the gamma and epsilon chains, while a peripheral stalk is formed by the delta, b and b' chains.

It localises to the plastid. Its subcellular location is the chloroplast thylakoid membrane. Its function is as follows. F(1)F(0) ATP synthase produces ATP from ADP in the presence of a proton or sodium gradient. F-type ATPases consist of two structural domains, F(1) containing the extramembraneous catalytic core and F(0) containing the membrane proton channel, linked together by a central stalk and a peripheral stalk. During catalysis, ATP synthesis in the catalytic domain of F(1) is coupled via a rotary mechanism of the central stalk subunits to proton translocation. In terms of biological role, component of the F(0) channel, it forms part of the peripheral stalk, linking F(1) to F(0). This Chlorokybus atmophyticus (Soil alga) protein is ATP synthase subunit b, chloroplastic.